Here is a 140-residue protein sequence, read N- to C-terminus: Endoribonuclease YbeY (140 aa).

3 residues coordinate Zn(2+): His-101, His-105, and His-111.

The protein belongs to the endoribonuclease YbeY family. Zn(2+) is required as a cofactor.

The protein localises to the cytoplasm. Its function is as follows. Single strand-specific metallo-endoribonuclease involved in late-stage 70S ribosome quality control and in maturation of the 3' terminus of the 16S rRNA. In Aliarcobacter butzleri (strain RM4018) (Arcobacter butzleri), this protein is Endoribonuclease YbeY.